Here is a 410-residue protein sequence, read N- to C-terminus: Serine hydroxymethyltransferase (410 aa).

(6S)-5,6,7,8-tetrahydrofolate is bound by residues leucine 119 and 123-125 (GHL). An N6-(pyridoxal phosphate)lysine modification is found at lysine 228. Position 351–353 (351–353 (SPF)) interacts with (6S)-5,6,7,8-tetrahydrofolate.

Belongs to the SHMT family. As to quaternary structure, homodimer. Requires pyridoxal 5'-phosphate as cofactor.

Its subcellular location is the cytoplasm. The enzyme catalyses (6R)-5,10-methylene-5,6,7,8-tetrahydrofolate + glycine + H2O = (6S)-5,6,7,8-tetrahydrofolate + L-serine. Its pathway is one-carbon metabolism; tetrahydrofolate interconversion. It functions in the pathway amino-acid biosynthesis; glycine biosynthesis; glycine from L-serine: step 1/1. In terms of biological role, catalyzes the reversible interconversion of serine and glycine with tetrahydrofolate (THF) serving as the one-carbon carrier. This reaction serves as the major source of one-carbon groups required for the biosynthesis of purines, thymidylate, methionine, and other important biomolecules. Also exhibits THF-independent aldolase activity toward beta-hydroxyamino acids, producing glycine and aldehydes, via a retro-aldol mechanism. This is Serine hydroxymethyltransferase from Alkaliphilus metalliredigens (strain QYMF).